Here is a 92-residue protein sequence, read N- to C-terminus: cAMP-dependent protein kinase inhibitor beta (92 aa).

The disordered stretch occupies residues 1–26; the sequence is MGGGTSPEAQQDSVMRTDSSEMTDVE. Polar residues predominate over residues 7 to 26; the sequence is PEAQQDSVMRTDSSEMTDVE. At Ser56 the chain carries Phosphoserine. A compositionally biased stretch (basic and acidic residues) spans 70–82; it reads EDAKTKNEEKDQG. The segment at 70 to 92 is disordered; it reads EDAKTKNEEKDQGQPKTPLNEGK.

The protein belongs to the PKI family.

Extremely potent competitive inhibitor of cAMP-dependent protein kinase activity, this protein interacts with the catalytic subunit of the enzyme after the cAMP-induced dissociation of its regulatory chains. This Mus musculus (Mouse) protein is cAMP-dependent protein kinase inhibitor beta (Pkib).